The sequence spans 770 residues: Proton-coupled zinc antiporter SLC30A5 (770 aa).

Topologically, residues M1–Y29 are cytoplasmic. Residues I30–L50 form a helical membrane-spanning segment. The Lumenal segment spans residues L51 to A53. The helical transmembrane segment at V54–F74 threads the bilayer. The Cytoplasmic portion of the chain corresponds to Q75–H95. A helical transmembrane segment spans residues A96–L116. Position 117 (R117) is a topological domain, lumenal. Residues T118–T138 form a helical membrane-spanning segment. The Cytoplasmic portion of the chain corresponds to S139–G149. A helical transmembrane segment spans residues A150–A170. The Lumenal segment spans residues K171–T190. A helical membrane pass occupies residues V191–L211. Over C212 to Q235 the chain is Cytoplasmic. The chain crosses the membrane as a helical span at residues A236–T256. Residues T257–W264 are Lumenal-facing. Residues S265–V285 traverse the membrane as a helical segment. At E286–R300 the chain is on the cytoplasmic side. Residues Y301–I321 traverse the membrane as a helical segment. Residues T322–H339 lie on the Lumenal side of the membrane. Residues V340–S360 traverse the membrane as a helical segment. The Cytoplasmic segment spans residues S361–Q415. Residues I416–W436 form a helical membrane-spanning segment. Topologically, residues T437–D445 are lumenal. A helical membrane pass occupies residues G446–T466. H448 and D452 together coordinate Zn(2+). Residues R467 to R480 lie on the Cytoplasmic side of the membrane. A helical membrane pass occupies residues V481–F501. Over M502 to N517 the chain is Lumenal. A helical transmembrane segment spans residues M518–S538. The his-rich loop; required for zinc transport stretch occupies residues H539–H579. Topologically, residues H539 to V597 are cytoplasmic. The disordered stretch occupies residues G548–S586. A compositionally biased stretch (basic residues) spans S558–H570. A helical membrane pass occupies residues F598–I618. Zn(2+) contacts are provided by H600 and D604. Over Q619 to G622 the chain is Lumenal. A helical membrane pass occupies residues W623–I643. The Cytoplasmic portion of the chain corresponds to P644 to M770.

Belongs to the cation diffusion facilitator (CDF) transporter (TC 2.A.4) family. SLC30A subfamily. As to quaternary structure, heterodimer with SLC30A6/ZNT6; form a functional zinc ion transmembrane transporter.

The protein localises to the golgi apparatus. The protein resides in the golgi stack membrane. Its subcellular location is the cytoplasmic vesicle. It localises to the COPII-coated vesicle membrane. It is found in the secretory vesicle membrane. The protein localises to the trans-Golgi network membrane. The catalysed reaction is Zn(2+)(in) + 2 H(+)(out) = Zn(2+)(out) + 2 H(+)(in). Functionally, together with SLC30A6 forms a functional proton-coupled zinc ion antiporter mediating zinc entry into the lumen of organelles along the secretory pathway. By contributing to zinc ion homeostasis within the early secretory pathway, regulates the activation and folding of enzymes like alkaline phosphatases and enzymes involved in phosphatidylinositol glycan anchor biosynthesis. This Gallus gallus (Chicken) protein is Proton-coupled zinc antiporter SLC30A5.